The sequence spans 244 residues: Chalcone--flavanone isomerase (244 aa).

Residues T45, N110, and S187 each coordinate substrate.

This sequence belongs to the chalcone isomerase family.

The catalysed reaction is a chalcone = a flavanone.. Its pathway is secondary metabolite biosynthesis; flavonoid biosynthesis. Catalyzes the intramolecular cyclization of bicyclic chalcones into tricyclic (S)-flavanones. Responsible for the isomerization of 4,2',4',6'-tetrahydroxychalcone (also termed chalcone) into naringenin. This Nicotiana tabacum (Common tobacco) protein is Chalcone--flavanone isomerase (CHI).